A 355-amino-acid polypeptide reads, in one-letter code: Receptor-like serine/threonine-protein kinase At1g78530 (355 aa).

The Extracellular segment spans residues 1-8 (MANAKETT). Residues 9 to 29 (FYITISVVAFVIGKIVIALLF) traverse the membrane as a helical segment. Topologically, residues 30-355 (YKRWKRKHTI…YIKLSTRSSF (326 aa)) are cytoplasmic. The 273-residue stretch at 75 to 347 (LSNKDILGSG…TEVVKLLEYI (273 aa)) folds into the Protein kinase domain. Residues 81–89 (LGSGGFGTV) and K103 contribute to the ATP site. A Phosphotyrosine modification is found at Y148. Residue D197 is the Proton acceptor of the active site. Phosphoserine is present on residues S201 and S230. 2 positions are modified to phosphothreonine: T231 and T236. Y244 is modified (phosphotyrosine).

It belongs to the protein kinase superfamily. Ser/Thr protein kinase family.

It localises to the cell membrane. The enzyme catalyses L-seryl-[protein] + ATP = O-phospho-L-seryl-[protein] + ADP + H(+). It catalyses the reaction L-threonyl-[protein] + ATP = O-phospho-L-threonyl-[protein] + ADP + H(+). This Arabidopsis thaliana (Mouse-ear cress) protein is Receptor-like serine/threonine-protein kinase At1g78530.